Consider the following 238-residue polypeptide: Ribosomal RNA small subunit methyltransferase G (238 aa).

S-adenosyl-L-methionine contacts are provided by residues Gly77, Phe82, Ala128–Glu129, and Arg147.

It belongs to the methyltransferase superfamily. RNA methyltransferase RsmG family.

The protein resides in the cytoplasm. Its function is as follows. Specifically methylates the N7 position of guanine in position 535 of 16S rRNA. In Listeria welshimeri serovar 6b (strain ATCC 35897 / DSM 20650 / CCUG 15529 / CIP 8149 / NCTC 11857 / SLCC 5334 / V8), this protein is Ribosomal RNA small subunit methyltransferase G.